Here is a 173-residue protein sequence, read N- to C-terminus: Crossover junction endodeoxyribonuclease RuvC (173 aa).

Active-site residues include Asp-8, Glu-67, and Asp-139. Residues Asp-8, Glu-67, and Asp-139 each coordinate Mg(2+).

This sequence belongs to the RuvC family. As to quaternary structure, homodimer which binds Holliday junction (HJ) DNA. The HJ becomes 2-fold symmetrical on binding to RuvC with unstacked arms; it has a different conformation from HJ DNA in complex with RuvA. In the full resolvosome a probable DNA-RuvA(4)-RuvB(12)-RuvC(2) complex forms which resolves the HJ. Requires Mg(2+) as cofactor.

It localises to the cytoplasm. The enzyme catalyses Endonucleolytic cleavage at a junction such as a reciprocal single-stranded crossover between two homologous DNA duplexes (Holliday junction).. The RuvA-RuvB-RuvC complex processes Holliday junction (HJ) DNA during genetic recombination and DNA repair. Endonuclease that resolves HJ intermediates. Cleaves cruciform DNA by making single-stranded nicks across the HJ at symmetrical positions within the homologous arms, yielding a 5'-phosphate and a 3'-hydroxyl group; requires a central core of homology in the junction. The consensus cleavage sequence is 5'-(A/T)TT(C/G)-3'. Cleavage occurs on the 3'-side of the TT dinucleotide at the point of strand exchange. HJ branch migration catalyzed by RuvA-RuvB allows RuvC to scan DNA until it finds its consensus sequence, where it cleaves and resolves the cruciform DNA. The sequence is that of Crossover junction endodeoxyribonuclease RuvC from Klebsiella pneumoniae subsp. pneumoniae (strain ATCC 700721 / MGH 78578).